The chain runs to 1686 residues: A disintegrin and metalloproteinase with thrombospondin motifs 7 (1686 aa).

The first 27 residues, 1–27, serve as a signal peptide directing secretion; sequence MPGGPSPRSPAPLLRPLLLLLCALAPG. The propeptide occupies 28 to 236; it reads APGPAPGRAT…RPRLRRLHQR (209 aa). Asparagine 94 carries an N-linked (GlcNAc...) asparagine glycan. A Cysteine switch motif is present at residues 202–209; that stretch reads STCGVQVY. Cysteine 204 contributes to the Zn(2+) binding site. A Peptidase M12B domain is found at 242 to 452; the sequence is KWVETLVVAD…GWGLCLDDPP (211 aa). 11 cysteine pairs are disulfide-bonded: cysteine 318-cysteine 372, cysteine 347-cysteine 354, cysteine 366-cysteine 447, cysteine 405-cysteine 431, cysteine 474-cysteine 497, cysteine 485-cysteine 503, cysteine 492-cysteine 522, cysteine 516-cysteine 527, cysteine 550-cysteine 587, cysteine 554-cysteine 592, and cysteine 565-cysteine 577. Histidine 388 lines the Zn(2+) pocket. Residue glutamate 389 is part of the active site. The Zn(2+) site is built by histidine 392 and histidine 398. The Disintegrin domain occupies 462 to 537; sequence VPPGVLYDVS…VPVGFRPEAV (76 aa). Residues 538 to 593 enclose the TSP type-1 1 domain; sequence DGGWSGWSAWSICSRSCGMGVQSAERQCTQPTPKYKGRYCVGERKRFRLCNLQACP. Residues asparagine 693 and asparagine 778 are each glycosylated (N-linked (GlcNAc...) asparagine). Residues 698 to 809 form a spacer region; sequence HTVSGTFEEA…PGVHYEYTIH (112 aa). 3 TSP type-1 domains span residues 821-880, 881-940, and 942-995; these read PVFS…QPCP, ARWW…NRHV, and CPAT…PLCR. Disordered stretches follow at residues 1024–1043, 1080–1257, and 1344–1396; these read HHLAPRPSPASSPKPGTMGN, PSEE…SPDV, and LGHM…PLAP. Positions 1182-1205 are enriched in polar residues; the sequence is DGLQTPATPESQNDFPVGKDSQSQ. Positions 1210 to 1226 are enriched in basic and acidic residues; that stretch reads WRDRTNEVFKDDEEPKG. Residues 1360 to 1375 show a composition bias toward low complexity; that stretch reads PESLSPEVPLSSRLLS. 4 TSP type-1 domains span residues 1411 to 1459, 1462 to 1522, 1523 to 1567, and 1569 to 1629; these read RNAG…RRCH, PCAT…QPCL, SWYT…PCNT, and PCTQ…EDCE. The PLAC domain occupies 1632-1672; sequence EPPRCERDRLSFGFCETLRLLGRCQLPTIRTQCCRSCSPPS. The segment at 1666-1686 is disordered; sequence RSCSPPSHGAPSRGHQRVARR.

As to quaternary structure, interacts with COMP. It depends on Zn(2+) as a cofactor. N-glycosylated. Can be O-fucosylated by POFUT2 on a serine or a threonine residue found within the consensus sequence C1-X(2)-(S/T)-C2-G of the TSP type-1 repeat domains where C1 and C2 are the first and second cysteine residue of the repeat, respectively. Fucosylated repeats can then be further glycosylated by the addition of a beta-1,3-glucose residue by the glucosyltransferase, B3GALTL. Fucosylation mediates the efficient secretion of ADAMTS family members. Can also be C-glycosylated with one or two mannose molecules on tryptophan residues within the consensus sequence W-X-X-W of the TPRs. N- and C-glycosylations can also facilitate secretion. In terms of processing, O-glycosylated proteoglycan; contains chondroitin sulfate. Post-translationally, may be cleaved by a furin endopeptidase. The precursor is sequentially processed. In terms of tissue distribution, expressed in heart, brain, placenta, lung, liver, skeletal muscle, kidney and pancreas. Detected in meniscus, bone, tendon, cartilage, synovium, fat and ligaments.

Its subcellular location is the secreted. It localises to the extracellular space. The protein resides in the extracellular matrix. Its function is as follows. Metalloprotease. Was previously shown to degrade COMP. However, a later study found no activity against COMP. The chain is A disintegrin and metalloproteinase with thrombospondin motifs 7 (ADAMTS7) from Homo sapiens (Human).